A 298-amino-acid polypeptide reads, in one-letter code: Chromatin modification-related protein YNG2 (298 aa).

The stretch at 20 to 86 (EVRHLLEEIK…KLVQKLQKEK (67 aa)) forms a coiled coil. Positions 140 to 158 (GFSDSASATPTPRNGSSAT) are enriched in polar residues. Residues 140–206 (GFSDSASATP…EEIEDPLPYE (67 aa)) form a disordered region. Low complexity predominate over residues 174 to 188 (VKGASSSSAQSSSAS). The PHD-type zinc-finger motif lies at 237-288 (NLYCFCQRVSFGEMIGCDNEDCKYEWFHWSCVGITSPPKDDEIWYCPDCASK). Zn(2+) contacts are provided by cysteine 240, cysteine 242, cysteine 253, cysteine 258, histidine 264, cysteine 267, cysteine 282, and cysteine 285.

The protein belongs to the ING family. In terms of assembly, interacts with H3K4me3 and to a lesser extent with H3K4me2. Component of the NuA4 histone acetyltransferase complex.

Its subcellular location is the nucleus. Component of the NuA4 histone acetyltransferase complex which is involved in transcriptional activation of selected genes principally by acetylation of nucleosomal histone H4 and H2A. The NuA4 complex is also involved in DNA repair. Involved in cell cycle progression and meiosis. The polypeptide is Chromatin modification-related protein YNG2 (YNG2) (Candida albicans (strain SC5314 / ATCC MYA-2876) (Yeast)).